Consider the following 130-residue polypeptide: Cytidine deaminase (130 aa).

Residues 3-130 form the CMP/dCMP-type deaminase domain; the sequence is VNLEWIIKQL…ELLMNGFKKS (128 aa). 43–45 is a substrate binding site; it reads NIE. Cys-54 provides a ligand contact to Zn(2+). Glu-56 serves as the catalytic Proton donor. Positions 88 and 91 each coordinate Zn(2+).

The protein belongs to the cytidine and deoxycytidylate deaminase family. As to quaternary structure, homodimer. Requires Zn(2+) as cofactor.

It catalyses the reaction cytidine + H2O + H(+) = uridine + NH4(+). The enzyme catalyses 2'-deoxycytidine + H2O + H(+) = 2'-deoxyuridine + NH4(+). In terms of biological role, this enzyme scavenges exogenous and endogenous cytidine and 2'-deoxycytidine for UMP synthesis. This Mycoplasma genitalium (strain ATCC 33530 / DSM 19775 / NCTC 10195 / G37) (Mycoplasmoides genitalium) protein is Cytidine deaminase (cdd).